An 89-amino-acid chain; its full sequence is Small ribosomal subunit protein uS15 (89 aa).

It belongs to the universal ribosomal protein uS15 family. Part of the 30S ribosomal subunit. Forms a bridge to the 50S subunit in the 70S ribosome, contacting the 23S rRNA.

Its function is as follows. One of the primary rRNA binding proteins, it binds directly to 16S rRNA where it helps nucleate assembly of the platform of the 30S subunit by binding and bridging several RNA helices of the 16S rRNA. In terms of biological role, forms an intersubunit bridge (bridge B4) with the 23S rRNA of the 50S subunit in the ribosome. The polypeptide is Small ribosomal subunit protein uS15 (Parabacteroides distasonis (strain ATCC 8503 / DSM 20701 / CIP 104284 / JCM 5825 / NCTC 11152)).